The primary structure comprises 216 residues: Putative transmembrane protein RNF32-DT (216 aa).

Residues 177–197 (WIPLLLVAGCVSCFVGLAVCV) traverse the membrane as a helical segment.

As to expression, expressed only in testis.

It localises to the cytoplasm. The protein localises to the membrane. In Homo sapiens (Human), this protein is Putative transmembrane protein RNF32-DT.